A 554-amino-acid polypeptide reads, in one-letter code: Esterase cest-33 (554 aa).

G2 is lipidated: N-myristoyl glycine. Cysteines 76 and 98 form a disulfide. The active-site Acyl-ester intermediate is the S208. Catalysis depends on charge relay system residues E331 and H446.

The protein belongs to the type-B carboxylesterase/lipase family.

The protein localises to the cytoplasm. The protein resides in the cell membrane. It catalyses the reaction a carboxylic ester + H2O = an alcohol + a carboxylate + H(+). In Caenorhabditis elegans, this protein is Esterase cest-33.